The primary structure comprises 61 residues: Small ribosomal subunit protein uS14 (61 aa).

C24, C27, C40, and C43 together coordinate Zn(2+).

Belongs to the universal ribosomal protein uS14 family. Zinc-binding uS14 subfamily. Part of the 30S ribosomal subunit. Contacts proteins S3 and S10. Requires Zn(2+) as cofactor.

Functionally, binds 16S rRNA, required for the assembly of 30S particles and may also be responsible for determining the conformation of the 16S rRNA at the A site. The polypeptide is Small ribosomal subunit protein uS14 (Carboxydothermus hydrogenoformans (strain ATCC BAA-161 / DSM 6008 / Z-2901)).